The following is a 429-amino-acid chain: MSSVVVVGTQWGDEGKGKITDFLSEHAEVVARYQGGNNAGHTIVFGGVKYKLHLIPSGIFYKEKICVIGNGLVVDPKALLEELKYLHDRGVSTDNLRVSNRAHVILPYHLKQDELEEASKGDNKIGTTKKGIGPAYMDKAARIGIRMADLLDREAFKEKLERNLVEKNRLFEKMYDTEGFTVEEIFEEYFEYGQQIAQYVCDTSVVLNDALDNNHRVLFEGAQGVMLDIDHGTYPFVTSSNPIAGGVTVGTGVGPAKVTRVVGVCKAYTSRVGDGPFPTELHDEIGHQIREVGREYGTTTGRPRRVGWFDSVVVRHARRVSGLTDLSLNSIDVLTGIPTLKICVAYKYNGEVIDEVPANLNILAKCEPVYEELPGWEEDITGVKSLDELPENARKYVERVSELTGIQISMFSVGPDRNQTNIVRNVYEA.

GTP contacts are provided by residues Gly-12 to Lys-18 and Gly-40 to Thr-42. Residue Asp-13 is the Proton acceptor of the active site. Asp-13 and Gly-40 together coordinate Mg(2+). IMP-binding positions include Asp-13–Lys-16, Asn-38–His-41, Thr-128, Arg-142, Gln-223, Thr-238, and Arg-302. Catalysis depends on His-41, which acts as the Proton donor. A substrate-binding site is contributed by Thr-298 to Arg-304. Residues Arg-304, Ser-330–Asp-332, and Ser-412–Gly-414 each bind GTP.

The protein belongs to the adenylosuccinate synthetase family. In terms of assembly, homodimer. Requires Mg(2+) as cofactor.

It localises to the cytoplasm. The enzyme catalyses IMP + L-aspartate + GTP = N(6)-(1,2-dicarboxyethyl)-AMP + GDP + phosphate + 2 H(+). Its pathway is purine metabolism; AMP biosynthesis via de novo pathway; AMP from IMP: step 1/2. Its function is as follows. Plays an important role in the de novo pathway of purine nucleotide biosynthesis. Catalyzes the first committed step in the biosynthesis of AMP from IMP. The polypeptide is Adenylosuccinate synthetase (Bacillus cereus (strain ATCC 14579 / DSM 31 / CCUG 7414 / JCM 2152 / NBRC 15305 / NCIMB 9373 / NCTC 2599 / NRRL B-3711)).